Reading from the N-terminus, the 655-residue chain is UvrABC system protein C (655 aa).

Residues 16-95 enclose the GIY-YIG domain; sequence TDPGVYRFRD…IKEFAPRYNL (80 aa). The UVR domain occupies 207-242; that stretch reads KRFIGTLEKQMAEAVAELDYERAARLRDDVIALRKV.

It belongs to the UvrC family. In terms of assembly, interacts with UvrB in an incision complex.

Its subcellular location is the cytoplasm. Functionally, the UvrABC repair system catalyzes the recognition and processing of DNA lesions. UvrC both incises the 5' and 3' sides of the lesion. The N-terminal half is responsible for the 3' incision and the C-terminal half is responsible for the 5' incision. This chain is UvrABC system protein C, found in Renibacterium salmoninarum (strain ATCC 33209 / DSM 20767 / JCM 11484 / NBRC 15589 / NCIMB 2235).